The sequence spans 501 residues: ATP synthase subunit alpha (501 aa).

ATP is bound at residue 170–177 (GDRQTGKS).

The protein belongs to the ATPase alpha/beta chains family. As to quaternary structure, F-type ATPases have 2 components, CF(1) - the catalytic core - and CF(0) - the membrane proton channel. CF(1) has five subunits: alpha(3), beta(3), gamma(1), delta(1), epsilon(1). CF(0) has three main subunits: a(1), b(2) and c(9-12). The alpha and beta chains form an alternating ring which encloses part of the gamma chain. CF(1) is attached to CF(0) by a central stalk formed by the gamma and epsilon chains, while a peripheral stalk is formed by the delta and b chains.

The protein resides in the cell membrane. The enzyme catalyses ATP + H2O + 4 H(+)(in) = ADP + phosphate + 5 H(+)(out). Produces ATP from ADP in the presence of a proton gradient across the membrane. The alpha chain is a regulatory subunit. The sequence is that of ATP synthase subunit alpha from Acholeplasma laidlawii (strain PG-8A).